The primary structure comprises 255 residues: Thiazole synthase (255 aa).

Residue Lys-96 is the Schiff-base intermediate with DXP of the active site. Residues Gly-157, Ala-183–Gly-184, and Asn-205–Thr-206 contribute to the 1-deoxy-D-xylulose 5-phosphate site.

It belongs to the ThiG family. As to quaternary structure, homotetramer. Forms heterodimers with either ThiH or ThiS.

The protein resides in the cytoplasm. The enzyme catalyses [ThiS sulfur-carrier protein]-C-terminal-Gly-aminoethanethioate + 2-iminoacetate + 1-deoxy-D-xylulose 5-phosphate = [ThiS sulfur-carrier protein]-C-terminal Gly-Gly + 2-[(2R,5Z)-2-carboxy-4-methylthiazol-5(2H)-ylidene]ethyl phosphate + 2 H2O + H(+). It functions in the pathway cofactor biosynthesis; thiamine diphosphate biosynthesis. Functionally, catalyzes the rearrangement of 1-deoxy-D-xylulose 5-phosphate (DXP) to produce the thiazole phosphate moiety of thiamine. Sulfur is provided by the thiocarboxylate moiety of the carrier protein ThiS. In vitro, sulfur can be provided by H(2)S. The chain is Thiazole synthase from Heliobacterium modesticaldum (strain ATCC 51547 / Ice1).